Here is a 110-residue protein sequence, read N- to C-terminus: Small ribosomal subunit protein bS16 (110 aa).

A disordered region spans residues 84-110 (KREARNNPEKAVPRKERKAAAEAAAKK).

The protein belongs to the bacterial ribosomal protein bS16 family.

This is Small ribosomal subunit protein bS16 from Rhodopseudomonas palustris (strain BisB18).